A 119-amino-acid polypeptide reads, in one-letter code: Large ribosomal subunit protein bL20 (119 aa).

Belongs to the bacterial ribosomal protein bL20 family.

Its function is as follows. Binds directly to 23S ribosomal RNA and is necessary for the in vitro assembly process of the 50S ribosomal subunit. It is not involved in the protein synthesizing functions of that subunit. The chain is Large ribosomal subunit protein bL20 from Granulibacter bethesdensis (strain ATCC BAA-1260 / CGDNIH1).